A 251-amino-acid chain; its full sequence is MDSGALWQDLGWQPDTLQARSFERLYALVLAGNTRLNLTRITGREEFWEKHLFDSLRGLAAFQDQKEPSLIDIGTGAGFPGLPIAIAHPDWYVVLVDSVRKKIAFVLSTIQALGLTNAQALTGRAEDLAHRREHRESYDLAVLRAVAQANVCAEYALPFVKLGGAAVLYRGNWEVQEEVELARACRALGGEIVEVDAFELPVSRAVRHCVVIRKTGPGLRVFPRPAGLPTQHPLGAIEGAPRVESEEPEEP.

S-adenosyl-L-methionine-binding positions include Gly74, Phe79, 125 to 126 (AE), and Arg144. Residues 224–251 (RPAGLPTQHPLGAIEGAPRVESEEPEEP) form a disordered region.

The protein belongs to the methyltransferase superfamily. RNA methyltransferase RsmG family.

It is found in the cytoplasm. Functionally, specifically methylates the N7 position of a guanine in 16S rRNA. The sequence is that of Ribosomal RNA small subunit methyltransferase G from Gloeobacter violaceus (strain ATCC 29082 / PCC 7421).